A 291-amino-acid chain; its full sequence is Probable S-adenosylmethionine-dependent methyltransferase CRG1 (291 aa).

It belongs to the methyltransferase superfamily.

The protein resides in the cytoplasm. Its function is as follows. Probable S-adenosylmethionine-dependent methyltransferase which mediates cantharidin resistance. The protein is Probable S-adenosylmethionine-dependent methyltransferase CRG1 (CRG1) of Saccharomyces cerevisiae (strain ATCC 204508 / S288c) (Baker's yeast).